Here is a 156-residue protein sequence, read N- to C-terminus: Small ribosomal subunit protein uS7 (156 aa).

Part of the 30S ribosomal subunit. Contacts proteins S9 and S11.

Functionally, one of the primary rRNA binding proteins, it binds directly to 16S rRNA where it nucleates assembly of the head domain of the 30S subunit. Is located at the subunit interface close to the decoding center, probably blocks exit of the E-site tRNA. The chain is Small ribosomal subunit protein uS7 from Rhodopseudomonas palustris (strain ATCC BAA-98 / CGA009).